Here is a 324-residue protein sequence, read N- to C-terminus: Phospho-N-acetylmuramoyl-pentapeptide-transferase (324 aa).

The next 10 helical transmembrane spans lie at 5-25 (AIVI…PLFI), 57-77 (IMIL…IAGL), 81-101 (TYLL…DDMI), 117-137 (FIGQ…SGFS), 147-167 (WSVD…VGGS), 176-196 (LDGL…VLAW), 203-223 (VAVF…FNAH), 227-247 (VFMG…VAVL), 250-270 (LELL…SVII), and 302-322 (IVVT…YIEV).

This sequence belongs to the glycosyltransferase 4 family. MraY subfamily. Mg(2+) is required as a cofactor.

Its subcellular location is the cell membrane. It carries out the reaction UDP-N-acetyl-alpha-D-muramoyl-L-alanyl-gamma-D-glutamyl-meso-2,6-diaminopimeloyl-D-alanyl-D-alanine + di-trans,octa-cis-undecaprenyl phosphate = di-trans,octa-cis-undecaprenyl diphospho-N-acetyl-alpha-D-muramoyl-L-alanyl-D-glutamyl-meso-2,6-diaminopimeloyl-D-alanyl-D-alanine + UMP. The protein operates within cell wall biogenesis; peptidoglycan biosynthesis. Catalyzes the initial step of the lipid cycle reactions in the biosynthesis of the cell wall peptidoglycan: transfers peptidoglycan precursor phospho-MurNAc-pentapeptide from UDP-MurNAc-pentapeptide onto the lipid carrier undecaprenyl phosphate, yielding undecaprenyl-pyrophosphoryl-MurNAc-pentapeptide, known as lipid I. This is Phospho-N-acetylmuramoyl-pentapeptide-transferase from Geobacillus kaustophilus (strain HTA426).